The primary structure comprises 47 residues: Photosystem II reaction center protein K (47 aa).

The propeptide occupies 1-10; that stretch reads MAAFTLDLMA. The helical transmembrane segment at 20–40 threads the bilayer; it reads APAVDVLPLIPIFFFLLVFVW.

This sequence belongs to the PsbK family. In terms of assembly, PSII is composed of 1 copy each of membrane proteins PsbA, PsbB, PsbC, PsbD, PsbE, PsbF, PsbH, PsbI, PsbJ, PsbK, PsbL, PsbM, PsbT, PsbX, PsbY, Psb30/Ycf12, peripheral proteins PsbO, CyanoQ (PsbQ), PsbU, PsbV and a large number of cofactors. It forms dimeric complexes.

The protein localises to the cellular thylakoid membrane. Functionally, one of the components of the core complex of photosystem II (PSII). PSII is a light-driven water:plastoquinone oxidoreductase that uses light energy to abstract electrons from H(2)O, generating O(2) and a proton gradient subsequently used for ATP formation. It consists of a core antenna complex that captures photons, and an electron transfer chain that converts photonic excitation into a charge separation. The polypeptide is Photosystem II reaction center protein K (Prochlorococcus marinus (strain MIT 9303)).